The sequence spans 454 residues: tRNA modification GTPase MnmE (454 aa).

3 residues coordinate (6S)-5-formyl-5,6,7,8-tetrahydrofolate: Arg-23, Glu-80, and Lys-120. In terms of domain architecture, TrmE-type G spans 216 to 377 (GMKVVIAGRP…LRNHLKQSMG (162 aa)). Asn-226 contributes to the K(+) binding site. Residues 226 to 231 (NAGKSS), 245 to 251 (TDIAGTT), 270 to 273 (DTAG), 335 to 338 (NKAD), and 358 to 360 (SAR) contribute to the GTP site. Ser-230 is a binding site for Mg(2+). The K(+) site is built by Thr-245, Ile-247, and Thr-250. Mg(2+) is bound at residue Thr-251. Lys-454 provides a ligand contact to (6S)-5-formyl-5,6,7,8-tetrahydrofolate.

The protein belongs to the TRAFAC class TrmE-Era-EngA-EngB-Septin-like GTPase superfamily. TrmE GTPase family. In terms of assembly, homodimer. Heterotetramer of two MnmE and two MnmG subunits. Requires K(+) as cofactor.

The protein resides in the cytoplasm. In terms of biological role, exhibits a very high intrinsic GTPase hydrolysis rate. Involved in the addition of a carboxymethylaminomethyl (cmnm) group at the wobble position (U34) of certain tRNAs, forming tRNA-cmnm(5)s(2)U34. The sequence is that of tRNA modification GTPase MnmE from Escherichia coli O127:H6 (strain E2348/69 / EPEC).